The following is a 147-amino-acid chain: Arginine vasopressin-induced protein 1 (147 aa).

2 disordered regions span residues 1–27 (MGTPASVVSEPPPWQAPTEARGRKQAS) and 99–147 (EPHS…QIRH). The segment covering 108–119 (QSATETASTEQY) has biased composition (polar residues). Basic residues predominate over residues 121-134 (HSRRKSARIRRNWK).

In terms of biological role, may be involved in MAP kinase activation, epithelial sodium channel (ENaC) down-regulation and cell cycling. This is Arginine vasopressin-induced protein 1 (AVPI1) from Pongo abelii (Sumatran orangutan).